Reading from the N-terminus, the 500-residue chain is NAD(P)H-quinone oxidoreductase chain 4, chloroplastic (500 aa).

A run of 15 helical transmembrane segments spans residues 4 to 24, 37 to 57, 87 to 107, 113 to 130, 134 to 154, 167 to 187, 207 to 227, 242 to 262, 272 to 292, 305 to 325, 330 to 350, 364 to 384, 386 to 406, 417 to 437, and 463 to 483; these read FPWL…LFFF, ICIC…HFEL, IGPI…AWPV, LFYF…GSFS, LLLF…LLSM, FILY…GIGL, IALE…KSPI, HYST…YGLV, AHSI…IYAA, IAYS…SISD, GAIL…FLAG, MGGL…LSMA, LALP…GIIT, VITL…LSML, and FVAI…DFVF.

The protein belongs to the complex I subunit 4 family.

The protein resides in the plastid. Its subcellular location is the chloroplast thylakoid membrane. The enzyme catalyses a plastoquinone + NADH + (n+1) H(+)(in) = a plastoquinol + NAD(+) + n H(+)(out). It carries out the reaction a plastoquinone + NADPH + (n+1) H(+)(in) = a plastoquinol + NADP(+) + n H(+)(out). This Cucumis sativus (Cucumber) protein is NAD(P)H-quinone oxidoreductase chain 4, chloroplastic.